A 424-amino-acid chain; its full sequence is Imidazolonepropionase (424 aa).

H84 and H86 together coordinate Fe(3+). 2 residues coordinate Zn(2+): H84 and H86. R93, Y156, and H189 together coordinate 4-imidazolone-5-propanoate. Residue Y156 coordinates N-formimidoyl-L-glutamate. H254 is a Fe(3+) binding site. Position 254 (H254) interacts with Zn(2+). E257 is a 4-imidazolone-5-propanoate binding site. D328 serves as a coordination point for Fe(3+). D328 is a Zn(2+) binding site. N-formimidoyl-L-glutamate contacts are provided by N330 and G332. S333 lines the 4-imidazolone-5-propanoate pocket.

Belongs to the metallo-dependent hydrolases superfamily. HutI family. The cofactor is Zn(2+). Fe(3+) serves as cofactor.

The protein resides in the cytoplasm. The catalysed reaction is 4-imidazolone-5-propanoate + H2O = N-formimidoyl-L-glutamate. The protein operates within amino-acid degradation; L-histidine degradation into L-glutamate; N-formimidoyl-L-glutamate from L-histidine: step 3/3. In terms of biological role, catalyzes the hydrolytic cleavage of the carbon-nitrogen bond in imidazolone-5-propanoate to yield N-formimidoyl-L-glutamate. It is the third step in the universal histidine degradation pathway. The sequence is that of Imidazolonepropionase from Geobacillus kaustophilus (strain HTA426).